The primary structure comprises 234 residues: Octanoyltransferase (234 aa).

Residues 42–226 form the BPL/LPL catalytic domain; it reads PDTPDEFWVV…ELASLIGYET (185 aa). Residues 81–88, 157–159, and 170–172 each bind substrate; these read RGGQVTYH, SLG, and GLA. Cysteine 188 serves as the catalytic Acyl-thioester intermediate.

Belongs to the LipB family.

It is found in the cytoplasm. The enzyme catalyses octanoyl-[ACP] + L-lysyl-[protein] = N(6)-octanoyl-L-lysyl-[protein] + holo-[ACP] + H(+). It participates in protein modification; protein lipoylation via endogenous pathway; protein N(6)-(lipoyl)lysine from octanoyl-[acyl-carrier-protein]: step 1/2. Its function is as follows. Catalyzes the transfer of endogenously produced octanoic acid from octanoyl-acyl-carrier-protein onto the lipoyl domains of lipoate-dependent enzymes. Lipoyl-ACP can also act as a substrate although octanoyl-ACP is likely to be the physiological substrate. The protein is Octanoyltransferase of Aeromonas hydrophila subsp. hydrophila (strain ATCC 7966 / DSM 30187 / BCRC 13018 / CCUG 14551 / JCM 1027 / KCTC 2358 / NCIMB 9240 / NCTC 8049).